The following is a 704-amino-acid chain: Elongation factor G (704 aa).

The 284-residue stretch at 8–291 folds into the tr-type G domain; that stretch reads DKVRNIGIMA…TVVECLPSPV (284 aa). GTP is bound by residues 17 to 24, 90 to 94, and 144 to 147; these read AHIDAGKT, DTPGH, and NKMD.

Belongs to the TRAFAC class translation factor GTPase superfamily. Classic translation factor GTPase family. EF-G/EF-2 subfamily.

The protein resides in the cytoplasm. Functionally, catalyzes the GTP-dependent ribosomal translocation step during translation elongation. During this step, the ribosome changes from the pre-translocational (PRE) to the post-translocational (POST) state as the newly formed A-site-bound peptidyl-tRNA and P-site-bound deacylated tRNA move to the P and E sites, respectively. Catalyzes the coordinated movement of the two tRNA molecules, the mRNA and conformational changes in the ribosome. The sequence is that of Elongation factor G from Prosthecochloris aestuarii (strain DSM 271 / SK 413).